Reading from the N-terminus, the 119-residue chain is Large ribosomal subunit protein bL20 (119 aa).

It belongs to the bacterial ribosomal protein bL20 family.

Functionally, binds directly to 23S ribosomal RNA and is necessary for the in vitro assembly process of the 50S ribosomal subunit. It is not involved in the protein synthesizing functions of that subunit. This chain is Large ribosomal subunit protein bL20, found in Nitrobacter hamburgensis (strain DSM 10229 / NCIMB 13809 / X14).